We begin with the raw amino-acid sequence, 45 residues long: MSQTPVATTPRNYPIFTVRWLALHTLGVPTVFFLGALAAMQFIRR.

A helical transmembrane segment spans residues 20 to 36 (WLALHTLGVPTVFFLGA). His-24 is a binding site for heme.

Belongs to the PsbE/PsbF family. In terms of assembly, heterodimer of an alpha subunit and a beta subunit. PSII is composed of 1 copy each of membrane proteins PsbA, PsbB, PsbC, PsbD, PsbE, PsbF, PsbH, PsbI, PsbJ, PsbK, PsbL, PsbM, PsbT, PsbX, PsbY, PsbZ, Psb30/Ycf12, peripheral proteins PsbO, CyanoQ (PsbQ), PsbU, PsbV and a large number of cofactors. It forms dimeric complexes. It depends on heme b as a cofactor.

The protein resides in the cellular thylakoid membrane. In terms of biological role, this b-type cytochrome is tightly associated with the reaction center of photosystem II (PSII). PSII is a light-driven water:plastoquinone oxidoreductase that uses light energy to abstract electrons from H(2)O, generating O(2) and a proton gradient subsequently used for ATP formation. It consists of a core antenna complex that captures photons, and an electron transfer chain that converts photonic excitation into a charge separation. The protein is Cytochrome b559 subunit beta of Parasynechococcus marenigrum (strain WH8102).